We begin with the raw amino-acid sequence, 391 residues long: Cystathionine beta-lyase MetC (391 aa).

Lys196 carries the N6-(pyridoxal phosphate)lysine modification.

This sequence belongs to the trans-sulfuration enzymes family. Homotetramer. Requires pyridoxal 5'-phosphate as cofactor.

It carries out the reaction L,L-cystathionine + H2O = L-homocysteine + pyruvate + NH4(+). It catalyses the reaction an S-substituted L-cysteine + H2O = a thiol + pyruvate + NH4(+). It functions in the pathway amino-acid biosynthesis; L-methionine biosynthesis via de novo pathway; L-homocysteine from L-cystathionine: step 1/1. Cystathionine beta-lyase activity is inhibited by sweat components such as glycine, serine and ammonium sulfate. Inhibited by cystathionine at a concentration higher than 6 mM. In terms of biological role, catalyzes the transformation of cystathionine into homocysteine. Can also catalyze, at low levels, the conversion of cystathionine into methionine and the conversion of methionine into methanethiol. This chain is Cystathionine beta-lyase MetC, found in Staphylococcus haemolyticus (strain JCSC1435).